Here is a 950-residue protein sequence, read N- to C-terminus: Lon protease homolog, mitochondrial (950 aa).

The transit peptide at 1-65 directs the protein to the mitochondrion; it reads MAASTGYVRL…VPMGGGQWRG (65 aa). 2 disordered regions span residues 67–94 and 212–243; these read WDAGSRGGSDETSEGGVEDGATASSGEG and PEGLEPEAENKQKSRRKLKRGKKEVGDELGAK. The Lon N-terminal domain maps to 112–360; sequence LPLIAISRNP…KALSLLKKEF (249 aa). Residues 224-233 show a composition bias toward basic residues; it reads KSRRKLKRGK. 513–520 lines the ATP pocket; that stretch reads GPPGVGKT. One can recognise a Lon proteolytic domain in the interval 749-939; sequence VTPPGVVMGL…RDIFRIAFPL (191 aa). Catalysis depends on residues serine 845 and lysine 888.

The protein belongs to the peptidase S16 family. In terms of assembly, homohexamer. Organized in a ring with a central cavity. The ATP-binding and proteolytic domains (AP-domain) form a hexameric chamber, while the N-terminal domain is arranged as a trimer of dimers. DNA and RNA binding is stimulated by substrate and inhibited by ATP binding. Interacts with TWNK and mitochondrial DNA polymerase subunit POLG.

The protein localises to the mitochondrion matrix. The catalysed reaction is Hydrolysis of proteins in presence of ATP.. In terms of biological role, ATP-dependent serine protease that mediates the selective degradation of misfolded, unassembled or oxidatively damaged polypeptides as well as certain short-lived regulatory proteins in the mitochondrial matrix. Endogenous substrates include mitochondrial steroidogenic acute regulatory (StAR) protein, DELE1, helicase Twinkle (TWNK) and the large ribosomal subunit protein MRPL32/bL32m. MRPL32/bL32m is protected from degradation by LONP1 when it is bound to a nucleic acid (RNA), but TWNK is not. May also have a chaperone function in the assembly of inner membrane protein complexes. Participates in the regulation of mitochondrial gene expression and in the maintenance of the integrity of the mitochondrial genome. Binds to mitochondrial promoters and RNA in a single-stranded, site-specific, and strand-specific manner. May regulate mitochondrial DNA replication and/or gene expression using site-specific, single-stranded DNA binding to target the degradation of regulatory proteins binding to adjacent sites in mitochondrial promoters. The polypeptide is Lon protease homolog, mitochondrial (Lonp1) (Rattus norvegicus (Rat)).